The primary structure comprises 636 residues: Nucleolin 2 (636 aa).

3 disordered regions span residues 1–386, 458–481, and 544–636; these read MGKS…SKTL, ANER…SRTI, and SEIG…NDEE. Basic and acidic residues-rich tracts occupy residues 43 to 63 and 76 to 89; these read KELI…KKVE and EKTK…KDES. Over residues 90 to 103 the composition is skewed to acidic residues; sequence SSEEEDDSSSDEEI. Positions 104–118 are enriched in basic and acidic residues; the sequence is APAKKRPEPIKKAKV. Acidic residues-rich tracts occupy residues 122–133, 152–163, and 182–193; these read SSDDDSTSDEET and SSDDDSSSDEET. Basic and acidic residues predominate over residues 224-238; sequence TPAKKEPIVVKKDSS. Composition is skewed to acidic residues over residues 267–278, 299–311, and 331–341; these read SSEEESSSDDEP, SSEE…ESDD, and SSDESSDESDK. Over residues 342-367 the composition is skewed to basic and acidic residues; it reads EESKDEKVTPKKKDSDVEMVDAEQKS. Over residues 368 to 383 the composition is skewed to polar residues; the sequence is NAKQPKTPTNQTQGGS. RRM domains follow at residues 384–460 and 479–558; these read KTLF…LANE and RTIY…ESRP. Residues 464-481 show a composition bias toward polar residues; it reads PRNSNPGRKGEGSQSRTI. 2 stretches are compositionally biased toward basic and acidic residues: residues 552-566 and 579-604; these read HVEE…EGRS and RHSD…DRGA. Polar residues predominate over residues 622 to 636; it reads MESSKGTKTVFNDEE.

Interacts with THAL in the nucleus. In terms of tissue distribution, expressed at low levels in flower buds.

The protein resides in the nucleus. Its subcellular location is the nucleolus. Involved in pre-rRNA processing and ribosome assembly. In Arabidopsis thaliana (Mouse-ear cress), this protein is Nucleolin 2.